Reading from the N-terminus, the 178-residue chain is Beta-lytic metalloendopeptidase (178 aa).

Cys65 and Cys111 are oxidised to a cystine. Zn(2+) is bound by residues His120 and His122. The cysteines at positions 155 and 168 are disulfide-linked.

The protein belongs to the peptidase M23A family. Zn(2+) serves as cofactor.

It carries out the reaction Cleavage of N-acetylmuramoyl-|-Ala, and of the insulin B chain at 23-Gly-|-Phe-24 &gt; 18-Val-|-Cys(SO3H).. This chain is Beta-lytic metalloendopeptidase, found in Lysobacter enzymogenes.